Here is a 247-residue protein sequence, read N- to C-terminus: TM2 domain-containing protein 3 (247 aa).

Residues 1–25 (MIPMMTLKRVCRVLLFITQMYVLSG) form the signal peptide. The Extracellular segment spans residues 26-179 (RGFLSFEYSE…RTFPKMLYCN (154 aa)). Asparagine 87, asparagine 99, asparagine 139, asparagine 155, asparagine 169, and asparagine 179 each carry an N-linked (GlcNAc...) asparagine glycan. The chain crosses the membrane as a helical span at residues 180-200 (WTGGYKWSTALALSITLGGFG). The 49-residue stretch at 183–231 (GYKWSTALALSITLGGFGADRFYLGQWREGLGKLFSFGGLGIWTLIDVF) folds into the TM2 domain. Over 201 to 215 (ADRFYLGQWREGLGK) the chain is Cytoplasmic. Residues 216 to 236 (LFSFGGLGIWTLIDVFLISVG) traverse the membrane as a helical segment. Topologically, residues 237-247 (YVGPADGSLYI) are extracellular.

Belongs to the TM2 family.

It localises to the membrane. This is TM2 domain-containing protein 3 (tm2d3) from Xenopus tropicalis (Western clawed frog).